Here is a 902-residue protein sequence, read N- to C-terminus: DNA mismatch repair protein MutS (902 aa).

654–661 provides a ligand contact to ATP; that stretch reads GPNMGGKS.

The protein belongs to the DNA mismatch repair MutS family.

Its function is as follows. This protein is involved in the repair of mismatches in DNA. It is possible that it carries out the mismatch recognition step. This protein has a weak ATPase activity. The chain is DNA mismatch repair protein MutS from Xanthomonas axonopodis pv. citri (strain 306).